Consider the following 345-residue polypeptide: S-adenosylmethionine:tRNA ribosyltransferase-isomerase (345 aa).

This sequence belongs to the QueA family. Monomer.

It is found in the cytoplasm. It carries out the reaction 7-aminomethyl-7-carbaguanosine(34) in tRNA + S-adenosyl-L-methionine = epoxyqueuosine(34) in tRNA + adenine + L-methionine + 2 H(+). The protein operates within tRNA modification; tRNA-queuosine biosynthesis. Functionally, transfers and isomerizes the ribose moiety from AdoMet to the 7-aminomethyl group of 7-deazaguanine (preQ1-tRNA) to give epoxyqueuosine (oQ-tRNA). The protein is S-adenosylmethionine:tRNA ribosyltransferase-isomerase of Acidiphilium cryptum (strain JF-5).